We begin with the raw amino-acid sequence, 316 residues long: uncharacterized protein (316 aa).

Disordered regions lie at residues 82–105 (AMAAASTGAGSSSGTNVGGSSGGN) and 238–257 (ASVSVQTTQQSRQQSTDTQE). Composition is skewed to low complexity over residues 84-96 (AAASTGAGSSSGT) and 239-255 (SVSVQTTQQSRQQSTDT).

The protein belongs to the MG307/MG309/MG338 family.

This is an uncharacterized protein from Mycoplasma pneumoniae (strain ATCC 29342 / M129 / Subtype 1) (Mycoplasmoides pneumoniae).